A 162-amino-acid chain; its full sequence is 6,7-dimethyl-8-ribityllumazine synthase (162 aa).

5-amino-6-(D-ribitylamino)uracil is bound by residues F22, 56–58, and 80–82; these read TFE and AVI. 85 to 86 lines the (2S)-2-hydroxy-3-oxobutyl phosphate pocket; it reads GT. H88 functions as the Proton donor in the catalytic mechanism. 5-amino-6-(D-ribitylamino)uracil is bound at residue M113. Residue R127 participates in (2S)-2-hydroxy-3-oxobutyl phosphate binding.

It belongs to the DMRL synthase family.

It catalyses the reaction (2S)-2-hydroxy-3-oxobutyl phosphate + 5-amino-6-(D-ribitylamino)uracil = 6,7-dimethyl-8-(1-D-ribityl)lumazine + phosphate + 2 H2O + H(+). The protein operates within cofactor biosynthesis; riboflavin biosynthesis; riboflavin from 2-hydroxy-3-oxobutyl phosphate and 5-amino-6-(D-ribitylamino)uracil: step 1/2. In terms of biological role, catalyzes the formation of 6,7-dimethyl-8-ribityllumazine by condensation of 5-amino-6-(D-ribitylamino)uracil with 3,4-dihydroxy-2-butanone 4-phosphate. This is the penultimate step in the biosynthesis of riboflavin. The chain is 6,7-dimethyl-8-ribityllumazine synthase from Anaeromyxobacter dehalogenans (strain 2CP-1 / ATCC BAA-258).